Reading from the N-terminus, the 120-residue chain is MAKVLFSLFSFLFLIIGVSAQFQFFEQMFNGQQQQHQRQPQDVPSDSQWYQDNYDRAHCTSYLCPGTLSCVAFPHHCPCAHPTYEEKFELADGNAICISKGGFKAGEAARKVELARKGLI.

The signal sequence occupies residues 1 to 20 (MAKVLFSLFSFLFLIIGVSA).

The protein belongs to the LCL2 family.

Probable component of the endoplasmic reticulum-associated degradation (ERAD) pathway. The protein is Long chronological lifespan protein 2 (lcl2) of Botryotinia fuckeliana (strain B05.10) (Noble rot fungus).